A 451-amino-acid chain; its full sequence is CCAAT/enhancer-binding protein (451 aa).

Disordered regions lie at residues Thr210 to Asp236, Gln267 to Asn298, and Leu328 to Arg389. Low complexity-rich tracts occupy residues Glu218–Ser228, Ser268–Asn298, and Leu334–Gln350. Residues Lys359–Arg370 are compositionally biased toward basic and acidic residues. Positions Thr365–Leu428 constitute a bZIP domain. The basic motif stretch occupies residues Arg369 to Lys398. Residues Leu400 to Leu407 are leucine-zipper.

It belongs to the bZIP family. C/EBP subfamily. As to quaternary structure, binds DNA as a dimer and can form stable heterodimers.

It localises to the nucleus. Its function is as follows. May be required for the expression of gene products mediating border cell migration. Among the DNA sequences that this protein binds with high affinity is a conserved site within the promoter of its gene. The chain is CCAAT/enhancer-binding protein (slbo) from Drosophila virilis (Fruit fly).